Here is a 440-residue protein sequence, read N- to C-terminus: MSAAPTSGPLTCRRAGPLRGAIEVPGDKSISHRSLLFGALSTGETRVTGLLDAEDVHSTRRAVEALGATVRDEGAEVVVTPPATLREPGDVIDCGNSGTSLRLLTGVLSGVPGLSVLTGDASLRRRPVRRVIDPLRVMGADLSARDGDRLPPVVVRGGPLRGARHLLPVASAQVKSALLLAGLFADGETAVVEPEKSRDHTERMLRGMGVPVRVSGLEVSVSAARPAGGRVDVPGDISSAAFFLCGAAALPGSEVTVRNLGVNETRTGLLDVLRAMGADVRLADLREVAGEPRADVTVRADRLEGTEIRGATIPRLIDELPAVMVMATQARGRTVIRDAKELRVKESDRLAAMGETLARAGARIELFEDGCAIDGPTPLRGVEVRTRLDHRIAMAMAVAQLFCGGEPVVLDDVACVATSFPGFFRLLDQVSGPASGGGAP.

3-phosphoshikimate is bound by residues lysine 28, serine 29, and arginine 33. Residue lysine 28 participates in phosphoenolpyruvate binding. Residues glycine 98 and arginine 126 each contribute to the phosphoenolpyruvate site. 4 residues coordinate 3-phosphoshikimate: serine 171, glutamine 173, aspartate 318, and lysine 345. Glutamine 173 serves as a coordination point for phosphoenolpyruvate. The Proton acceptor role is filled by aspartate 318. Arginine 349 and arginine 391 together coordinate phosphoenolpyruvate.

It belongs to the EPSP synthase family. Monomer.

It localises to the cytoplasm. The enzyme catalyses 3-phosphoshikimate + phosphoenolpyruvate = 5-O-(1-carboxyvinyl)-3-phosphoshikimate + phosphate. Its pathway is metabolic intermediate biosynthesis; chorismate biosynthesis; chorismate from D-erythrose 4-phosphate and phosphoenolpyruvate: step 6/7. Catalyzes the transfer of the enolpyruvyl moiety of phosphoenolpyruvate (PEP) to the 5-hydroxyl of shikimate-3-phosphate (S3P) to produce enolpyruvyl shikimate-3-phosphate and inorganic phosphate. This chain is 3-phosphoshikimate 1-carboxyvinyltransferase, found in Anaeromyxobacter sp. (strain K).